Here is a 248-residue protein sequence, read N- to C-terminus: PF03932 family protein CutC (248 aa).

It belongs to the CutC family. In terms of assembly, homodimer.

The protein localises to the cytoplasm. The protein is PF03932 family protein CutC of Escherichia coli O139:H28 (strain E24377A / ETEC).